A 263-amino-acid chain; its full sequence is Undecaprenyl-diphosphatase 2 (263 aa).

8 helical membrane passes run 15–37, 42–62, 83–103, 106–126, 142–162, 183–203, 216–236, and 242–262; these read GLTE…LLGF, AKVF…VIFW, LHII…HSAI, VLFG…LMIV, ITYK…WPGF, AEYT…LDLI, LFAT…VSFL, and VKLT…YFFI.

It belongs to the UppP family.

It localises to the cell membrane. The enzyme catalyses di-trans,octa-cis-undecaprenyl diphosphate + H2O = di-trans,octa-cis-undecaprenyl phosphate + phosphate + H(+). In terms of biological role, catalyzes the dephosphorylation of undecaprenyl diphosphate (UPP). Confers resistance to bacitracin. In Bacillus cereus (strain ATCC 10987 / NRS 248), this protein is Undecaprenyl-diphosphatase 2.